A 340-amino-acid chain; its full sequence is Immunoglobulin-binding protein 1 family member C (340 aa).

Disordered regions lie at residues 223-243 (KDSS…PPMK) and 292-340 (PEEF…QNMG). A compositionally biased stretch (acidic residues) spans 303-314 (EDQEKEEEDDEQ). Basic and acidic residues predominate over residues 318–330 (RAREWDDWKDTHP).

The protein belongs to the IGBP1/TAP42 family.

This is Immunoglobulin-binding protein 1 family member C from Homo sapiens (Human).